The primary structure comprises 455 residues: Exodeoxyribonuclease 7 large subunit (455 aa).

The protein belongs to the XseA family. In terms of assembly, heterooligomer composed of large and small subunits.

The protein localises to the cytoplasm. The catalysed reaction is Exonucleolytic cleavage in either 5'- to 3'- or 3'- to 5'-direction to yield nucleoside 5'-phosphates.. Its function is as follows. Bidirectionally degrades single-stranded DNA into large acid-insoluble oligonucleotides, which are then degraded further into small acid-soluble oligonucleotides. The protein is Exodeoxyribonuclease 7 large subunit of Koribacter versatilis (strain Ellin345).